Reading from the N-terminus, the 212-residue chain is Pyridoxine/pyridoxamine 5'-phosphate oxidase (212 aa).

Substrate is bound by residues 8–11 (RREY) and Lys66. FMN-binding positions include 61–66 (RIVLLK), 76–77 (FT), Arg82, Lys83, and Gln105. Tyr123, Arg127, and Ser131 together coordinate substrate. FMN is bound by residues 140-141 (QS) and Trp185. Position 191 to 193 (191 to 193 (RLH)) interacts with substrate. Arg195 is an FMN binding site.

Belongs to the pyridoxamine 5'-phosphate oxidase family. As to quaternary structure, homodimer. It depends on FMN as a cofactor.

The enzyme catalyses pyridoxamine 5'-phosphate + O2 + H2O = pyridoxal 5'-phosphate + H2O2 + NH4(+). It carries out the reaction pyridoxine 5'-phosphate + O2 = pyridoxal 5'-phosphate + H2O2. It participates in cofactor metabolism; pyridoxal 5'-phosphate salvage; pyridoxal 5'-phosphate from pyridoxamine 5'-phosphate: step 1/1. The protein operates within cofactor metabolism; pyridoxal 5'-phosphate salvage; pyridoxal 5'-phosphate from pyridoxine 5'-phosphate: step 1/1. In terms of biological role, catalyzes the oxidation of either pyridoxine 5'-phosphate (PNP) or pyridoxamine 5'-phosphate (PMP) into pyridoxal 5'-phosphate (PLP). This chain is Pyridoxine/pyridoxamine 5'-phosphate oxidase, found in Shewanella putrefaciens (strain CN-32 / ATCC BAA-453).